We begin with the raw amino-acid sequence, 61 residues long: Ferredoxin-3 (61 aa).

2 4Fe-4S ferredoxin-type domains span residues 2 to 31 (YKIT…LQDG) and 32 to 61 (KAVA…VEEN). [3Fe-4S] cluster is bound by residues Cys11 and Cys17. Positions 21, 41, 44, and 47 each coordinate [4Fe-4S] cluster. Residue Cys51 coordinates [3Fe-4S] cluster.

[3Fe-4S] cluster serves as cofactor. It depends on [4Fe-4S] cluster as a cofactor.

Ferredoxins are iron-sulfur proteins that transfer electrons in a wide variety of metabolic reactions. The sequence is that of Ferredoxin-3 from Desulfocurvibacter africanus (Desulfovibrio africanus).